A 209-amino-acid polypeptide reads, in one-letter code: Probable GTP-binding protein EngB (209 aa).

Residues Thr-22–Ala-198 form the EngB-type G domain. The Mg(2+) site is built by Ser-37 and Thr-59.

This sequence belongs to the TRAFAC class TrmE-Era-EngA-EngB-Septin-like GTPase superfamily. EngB GTPase family. Requires Mg(2+) as cofactor.

Functionally, necessary for normal cell division and for the maintenance of normal septation. The polypeptide is Probable GTP-binding protein EngB (Neisseria gonorrhoeae (strain ATCC 700825 / FA 1090)).